A 326-amino-acid polypeptide reads, in one-letter code: Glycerol-3-phosphate dehydrogenase [NAD(P)+] (326 aa).

Residues Trp13, Arg33, and Lys107 each contribute to the NADPH site. Residues Lys107, Gly135, and Ser137 each contribute to the sn-glycerol 3-phosphate site. Ala139 contributes to the NADPH binding site. Lys190, Asp243, Ser253, Arg254, and Asn255 together coordinate sn-glycerol 3-phosphate. Residue Lys190 is the Proton acceptor of the active site. Arg254 serves as a coordination point for NADPH. NADPH-binding residues include Leu273 and Glu275.

The protein belongs to the NAD-dependent glycerol-3-phosphate dehydrogenase family.

It is found in the cytoplasm. The enzyme catalyses sn-glycerol 3-phosphate + NAD(+) = dihydroxyacetone phosphate + NADH + H(+). It catalyses the reaction sn-glycerol 3-phosphate + NADP(+) = dihydroxyacetone phosphate + NADPH + H(+). The protein operates within membrane lipid metabolism; glycerophospholipid metabolism. In terms of biological role, catalyzes the reduction of the glycolytic intermediate dihydroxyacetone phosphate (DHAP) to sn-glycerol 3-phosphate (G3P), the key precursor for phospholipid synthesis. The polypeptide is Glycerol-3-phosphate dehydrogenase [NAD(P)+] (Brucella ovis (strain ATCC 25840 / 63/290 / NCTC 10512)).